Reading from the N-terminus, the 195-residue chain is dTDP-4-dehydrorhamnose 3,5-epimerase (195 aa).

Substrate is bound by residues R31, E36, Q54–N56, and R67. H70 acts as the Proton acceptor in catalysis. Residues K80 and H127 each coordinate substrate. Catalysis depends on Y140, which acts as the Proton donor. Substrate is bound by residues D151 and K176.

It belongs to the dTDP-4-dehydrorhamnose 3,5-epimerase family. In terms of assembly, homodimer.

It catalyses the reaction dTDP-4-dehydro-6-deoxy-alpha-D-glucose = dTDP-4-dehydro-beta-L-rhamnose. Its pathway is carbohydrate biosynthesis; dTDP-L-rhamnose biosynthesis. Catalyzes the epimerization of the C3' and C5'positions of dTDP-6-deoxy-D-xylo-4-hexulose, forming dTDP-6-deoxy-L-lyxo-4-hexulose. In Sinorhizobium fredii (strain NBRC 101917 / NGR234), this protein is dTDP-4-dehydrorhamnose 3,5-epimerase.